Reading from the N-terminus, the 442-residue chain is Histidinol dehydrogenase (442 aa).

Residues tyrosine 138, glutamine 196, and asparagine 219 each coordinate NAD(+). Substrate-binding residues include serine 245, glutamine 267, and histidine 270. Zn(2+) is bound by residues glutamine 267 and histidine 270. Catalysis depends on proton acceptor residues glutamate 334 and histidine 335. Residues histidine 335, aspartate 368, glutamate 422, and histidine 427 each coordinate substrate. Aspartate 368 is a binding site for Zn(2+). Zn(2+) is bound at residue histidine 427.

It belongs to the histidinol dehydrogenase family. Homodimer. The cofactor is Zn(2+).

The catalysed reaction is L-histidinol + 2 NAD(+) + H2O = L-histidine + 2 NADH + 3 H(+). It functions in the pathway amino-acid biosynthesis; L-histidine biosynthesis; L-histidine from 5-phospho-alpha-D-ribose 1-diphosphate: step 9/9. Its function is as follows. Catalyzes the sequential NAD-dependent oxidations of L-histidinol to L-histidinaldehyde and then to L-histidine. The sequence is that of Histidinol dehydrogenase from Pectobacterium atrosepticum (strain SCRI 1043 / ATCC BAA-672) (Erwinia carotovora subsp. atroseptica).